The following is a 555-amino-acid chain: Serine/threonine-protein kinase AGC1-7 (555 aa).

Positions 1-126 (MLTKPGKKLD…PSKPHTGGDI (126 aa)) are disordered. Composition is skewed to basic and acidic residues over residues 7–16 (KKLDSSESTH) and 35–54 (PRKEMQQKPLFDPKKMDNLI). Over residues 84 to 118 (SQSNLNTKPNNNNSNNNSNMSSRSNSIESTSSNPS) the composition is skewed to low complexity. One can recognise a Protein kinase domain in the interval 146–480 (FRLLKRLGYG…ATEIKQHPFF (335 aa)). Residues 152–160 (LGYGDIGSV) and lysine 175 contribute to the ATP site. Aspartate 271 functions as the Proton acceptor in the catalytic mechanism. One can recognise an AGC-kinase C-terminal domain in the interval 481 to 555 (EGVNWALIRS…DPDYIDFEYF (75 aa)). Residues 514 to 547 (AAVDGGGKKNNNGAGGGCSTGGGDNKPNGDCNDP) form a disordered region. Gly residues predominate over residues 526–537 (GAGGGCSTGGGD).

The protein belongs to the protein kinase superfamily. AGC Ser/Thr protein kinase family. Interacts with PDPK1/PDK1. Post-translationally, autophosphorylated and phosphorylated by PDPK1/PDK1. Specifically expressed in pollen grains.

It is found in the cytoplasm. The enzyme catalyses L-seryl-[protein] + ATP = O-phospho-L-seryl-[protein] + ADP + H(+). It carries out the reaction L-threonyl-[protein] + ATP = O-phospho-L-threonyl-[protein] + ADP + H(+). Activated by PDPK1/PDK1. Its function is as follows. Functions redudantly with AGC1-5 as signaling component in the pollen tube. Required for polarized growth of pollen tubes. The sequence is that of Serine/threonine-protein kinase AGC1-7 from Arabidopsis thaliana (Mouse-ear cress).